A 98-amino-acid chain; its full sequence is Histone H4-like protein type G (98 aa).

Residues lysine 17–lysine 21 mediate DNA binding.

The protein belongs to the histone H4 family. In terms of assembly, the nucleosome is a histone octamer containing two molecules each of H2A, H2B, H3 and H4 assembled in one H3-H4 heterotetramer and two H2A-H2B heterodimers. The octamer wraps approximately 147 bp of DNA.

The protein localises to the nucleus. It is found in the chromosome. Its function is as follows. Core component of nucleosome. Nucleosomes wrap and compact DNA into chromatin, limiting DNA accessibility to the cellular machineries which require DNA as a template. Histones thereby play a central role in transcription regulation, DNA repair, DNA replication and chromosomal stability. DNA accessibility is regulated via a complex set of post-translational modifications of histones, also called histone code, and nucleosome remodeling. This is Histone H4-like protein type G from Homo sapiens (Human).